The primary structure comprises 280 residues: Acetyl-coenzyme A carboxylase carboxyl transferase subunit beta (280 aa).

The 253-residue stretch at 28–280 (IMTKCPSCRT…TLTKLLAMHQ (253 aa)) folds into the CoA carboxyltransferase N-terminal domain. Zn(2+)-binding residues include Cys32, Cys35, Cys51, and Cys54. The segment at 32-54 (CPSCRTIMYTKDLKKNLSVCRTC) adopts a C4-type zinc-finger fold.

It belongs to the AccD/PCCB family. As to quaternary structure, acetyl-CoA carboxylase is a heterohexamer composed of biotin carboxyl carrier protein (AccB), biotin carboxylase (AccC) and two subunits each of ACCase subunit alpha (AccA) and ACCase subunit beta (AccD). Requires Zn(2+) as cofactor.

It localises to the cytoplasm. The catalysed reaction is N(6)-carboxybiotinyl-L-lysyl-[protein] + acetyl-CoA = N(6)-biotinyl-L-lysyl-[protein] + malonyl-CoA. Its pathway is lipid metabolism; malonyl-CoA biosynthesis; malonyl-CoA from acetyl-CoA: step 1/1. Its function is as follows. Component of the acetyl coenzyme A carboxylase (ACC) complex. Biotin carboxylase (BC) catalyzes the carboxylation of biotin on its carrier protein (BCCP) and then the CO(2) group is transferred by the transcarboxylase to acetyl-CoA to form malonyl-CoA. This Shouchella clausii (strain KSM-K16) (Alkalihalobacillus clausii) protein is Acetyl-coenzyme A carboxylase carboxyl transferase subunit beta.